The primary structure comprises 101 residues: Putative pterin-4-alpha-carbinolamine dehydratase (101 aa).

Belongs to the pterin-4-alpha-carbinolamine dehydratase family.

It catalyses the reaction (4aS,6R)-4a-hydroxy-L-erythro-5,6,7,8-tetrahydrobiopterin = (6R)-L-erythro-6,7-dihydrobiopterin + H2O. The chain is Putative pterin-4-alpha-carbinolamine dehydratase from Rhodopseudomonas palustris (strain BisB18).